The primary structure comprises 384 residues: Trophoblast glycoprotein-like (384 aa).

An N-terminal signal peptide occupies residues 1–30 (MAPRAGQRGLWSPLPGLLLLAAALSRPAAP). Disulfide bonds link Cys31-Cys37 and Cys35-Cys47. Residues 31–309 (CPFQCYCFGS…DVAGPELEAS (279 aa)) are Extracellular-facing. 5 LRR repeats span residues 61–84 (PPDARNLTIVGANLTVLRAAAFAG), 95–118 (LPLLTALRLTHNNIEVVEDGAFDG), 119–142 (LPSLAALDLSHNPLRALGYRAFRG), 173–196 (LAELRLLGLVGNALSRLPLAALRL), and 198–219 (RLEQLDARVNALAGLGPDELSA). Asn66 carries an N-linked (GlcNAc...) asparagine glycan. 2 disulfide bridges follow: Cys240/Cys266 and Cys242/Cys287. Residues 310 to 330 (YVFFGLVLALIGLIFLMVLYL) form a helical membrane-spanning segment. Topologically, residues 331-384 (NRRGIQRWMHNLREACRDQMEGYHYRYEQDADPRRAPAPAAPAGSRATSPGSGL) are cytoplasmic. A disordered region spans residues 361-384 (ADPRRAPAPAAPAGSRATSPGSGL). Positions 367–384 (PAPAAPAGSRATSPGSGL) are enriched in low complexity.

The protein localises to the membrane. This Mus musculus (Mouse) protein is Trophoblast glycoprotein-like (Tpbgl).